The primary structure comprises 359 residues: DNA replication and repair protein RecF (359 aa).

Residue 30–37 participates in ATP binding; that stretch reads GQNAQGKT.

Belongs to the RecF family.

The protein localises to the cytoplasm. The RecF protein is involved in DNA metabolism; it is required for DNA replication and normal SOS inducibility. RecF binds preferentially to single-stranded, linear DNA. It also seems to bind ATP. The sequence is that of DNA replication and repair protein RecF from Lactococcus lactis subsp. cremoris (strain SK11).